Consider the following 500-residue polypeptide: Cytochrome P450 2D16 (500 aa).

Serine 249 carries the phosphoserine modification. Heme is bound at residue cysteine 446.

The protein belongs to the cytochrome P450 family. It depends on heme as a cofactor. In terms of tissue distribution, expressed at high levels in the inner zone of the adrenal cortex.

It is found in the endoplasmic reticulum membrane. The protein localises to the microsome membrane. The catalysed reaction is an organic molecule + reduced [NADPH--hemoprotein reductase] + O2 = an alcohol + oxidized [NADPH--hemoprotein reductase] + H2O + H(+). In terms of biological role, cytochromes P450 are a group of heme-thiolate monooxygenases. In liver microsomes, this enzyme is involved in an NADPH-dependent electron transport pathway. It oxidizes a variety of structurally unrelated compounds, including steroids, fatty acids, and xenobiotics. In Cavia porcellus (Guinea pig), this protein is Cytochrome P450 2D16 (CYP2D16).